The primary structure comprises 207 residues: Thymidylate kinase (207 aa).

An ATP-binding site is contributed by 10 to 17 (GIEGSGKS).

This sequence belongs to the thymidylate kinase family.

The enzyme catalyses dTMP + ATP = dTDP + ADP. Phosphorylation of dTMP to form dTDP in both de novo and salvage pathways of dTTP synthesis. This Halothermothrix orenii (strain H 168 / OCM 544 / DSM 9562) protein is Thymidylate kinase.